We begin with the raw amino-acid sequence, 363 residues long: Protein-arginine kinase (363 aa).

The 231-residue stretch at 24–254 (IVLSSRIRLA…AQLIEQERSA (231 aa)) folds into the Phosphagen kinase C-terminal domain. ATP contacts are provided by residues 27-31 (SSRIR), His-92, Arg-125, 176-180 (RASVM), and 207-212 (RGIYGE). Residues 337-342 (RDARRA) carry the RDXXRA motif of the pArg binding pocket involved in allosteric regulation motif.

It belongs to the ATP:guanido phosphotransferase family.

It carries out the reaction L-arginyl-[protein] + ATP = N(omega)-phospho-L-arginyl-[protein] + ADP + H(+). With respect to regulation, appears to be allosterically activated by the binding of pArg-containing polypeptides to the pArg-binding pocket localized in the C-terminal domain of McsB. Functionally, catalyzes the specific phosphorylation of arginine residues in a large number of proteins. Is part of the bacterial stress response system. Protein arginine phosphorylation has a physiologically important role and is involved in the regulation of many critical cellular processes, such as protein homeostasis, motility, competence, and stringent and stress responses, by regulating gene expression and protein activity. This is Protein-arginine kinase from Bacillus velezensis (strain DSM 23117 / BGSC 10A6 / LMG 26770 / FZB42) (Bacillus amyloliquefaciens subsp. plantarum).